Reading from the N-terminus, the 122-residue chain is Small ribosomal subunit protein uS13 (122 aa).

A disordered region spans residues 97-122; sequence PVRGQRTKTNARTRKGPARTVAGKKK.

Belongs to the universal ribosomal protein uS13 family. Part of the 30S ribosomal subunit. Forms a loose heterodimer with protein S19. Forms two bridges to the 50S subunit in the 70S ribosome.

Its function is as follows. Located at the top of the head of the 30S subunit, it contacts several helices of the 16S rRNA. In the 70S ribosome it contacts the 23S rRNA (bridge B1a) and protein L5 of the 50S subunit (bridge B1b), connecting the 2 subunits; these bridges are implicated in subunit movement. Contacts the tRNAs in the A and P-sites. This chain is Small ribosomal subunit protein uS13, found in Geobacter sulfurreducens (strain ATCC 51573 / DSM 12127 / PCA).